The following is a 332-amino-acid chain: CAX-interacting protein 4 (332 aa).

The interval 33 to 59 is disordered; sequence GYDPYAPTSKEEPKTTQQKTEDPENSY. The segment covering 41–54 has biased composition (basic and acidic residues); the sequence is SKEEPKTTQQKTED. A CCHC-type zinc finger spans residues 81–98; it reads GSCKKCGRVGHLTFQCRN. Over residues 124–133 the composition is skewed to basic and acidic residues; the sequence is IRRGVGKGEV. The interval 124–332 is disordered; the sequence is IRRGVGKGEV…RKRHHRKERE (209 aa). The segment covering 134–153 has biased composition (acidic residues); the sequence is EEVSSEEEEESESSDSDVDS. Residues 154-163 show a composition bias toward basic and acidic residues; it reads EMERIIAERF. 2 stretches are compositionally biased toward basic residues: residues 198-214 and 227-236; these read RKRR…HKRR and SKRRKERRGR. Positions 241-250 are enriched in acidic residues; that stretch reads DDSDESEDED. Composition is skewed to basic residues over residues 254–269 and 314–332; these read VKRK…RSRR and SSKR…KERE.

In terms of assembly, interacts with CAX1. In terms of tissue distribution, expressed in leaves, stems and roots, and at lower levels in flowers.

Its subcellular location is the nucleus. Its function is as follows. May regulate CAX1 cation transporter. This chain is CAX-interacting protein 4 (CXIP4), found in Arabidopsis thaliana (Mouse-ear cress).